We begin with the raw amino-acid sequence, 274 residues long: Bis(5'-nucleosyl)-tetraphosphatase, symmetrical (274 aa).

Belongs to the Ap4A hydrolase family.

The enzyme catalyses P(1),P(4)-bis(5'-adenosyl) tetraphosphate + H2O = 2 ADP + 2 H(+). Its function is as follows. Hydrolyzes diadenosine 5',5'''-P1,P4-tetraphosphate to yield ADP. This is Bis(5'-nucleosyl)-tetraphosphatase, symmetrical from Buchnera aphidicola subsp. Acyrthosiphon pisum (strain Tuc7).